The primary structure comprises 338 residues: Ketol-acid reductoisomerase (NADP(+)) (338 aa).

In terms of domain architecture, KARI N-terminal Rossmann spans 1–181; sequence MKVFYDKDAD…GGGRAGIIET (181 aa). NADP(+) is bound by residues 24–27, Arg-47, and Ser-52; that span reads YGSQ. The active site involves His-107. NADP(+) is bound at residue Gly-133. In terms of domain architecture, KARI C-terminal knotted spans 182-327; sequence NFREETETDL…GKLRAMMPWI (146 aa). Mg(2+)-binding residues include Asp-190, Glu-194, Glu-226, and Glu-230. Ser-251 is a substrate binding site.

This sequence belongs to the ketol-acid reductoisomerase family. It depends on Mg(2+) as a cofactor.

The catalysed reaction is (2R)-2,3-dihydroxy-3-methylbutanoate + NADP(+) = (2S)-2-acetolactate + NADPH + H(+). The enzyme catalyses (2R,3R)-2,3-dihydroxy-3-methylpentanoate + NADP(+) = (S)-2-ethyl-2-hydroxy-3-oxobutanoate + NADPH + H(+). It functions in the pathway amino-acid biosynthesis; L-isoleucine biosynthesis; L-isoleucine from 2-oxobutanoate: step 2/4. The protein operates within amino-acid biosynthesis; L-valine biosynthesis; L-valine from pyruvate: step 2/4. Functionally, involved in the biosynthesis of branched-chain amino acids (BCAA). Catalyzes an alkyl-migration followed by a ketol-acid reduction of (S)-2-acetolactate (S2AL) to yield (R)-2,3-dihydroxy-isovalerate. In the isomerase reaction, S2AL is rearranged via a Mg-dependent methyl migration to produce 3-hydroxy-3-methyl-2-ketobutyrate (HMKB). In the reductase reaction, this 2-ketoacid undergoes a metal-dependent reduction by NADPH to yield (R)-2,3-dihydroxy-isovalerate. This Cupriavidus metallidurans (strain ATCC 43123 / DSM 2839 / NBRC 102507 / CH34) (Ralstonia metallidurans) protein is Ketol-acid reductoisomerase (NADP(+)).